An 847-amino-acid polypeptide reads, in one-letter code: Signal transducer and activator of transcription 6 (847 aa).

Serine 2 carries the N-acetylserine modification. In terms of domain architecture, SH2 spans 517–632; it reads WFDGVLDLTK…EAFRSHYKPE (116 aa). Tyrosine 641 carries the phosphotyrosine; by JAK modification. Residues 802–806 carry the LXXLL motif motif; sequence LTKLL. A disordered region spans residues 809–847; the sequence is GQGESGGGSLGAQPLLQPSHYGQSGISMSHMDLRANPSW.

The protein belongs to the transcription factor STAT family. As to quaternary structure, forms a homodimer or a heterodimer with a related family member. Interacts with NCOA1 via its C-terminal LXXLL motif. Tyrosine phosphorylated on Tyr-641 following stimulation by IL4/interleukin-4. Tyrosine phosphorylated following stimulation by IL3/interleukin-3. Dephosphorylation on tyrosine residues by PTPN2 negatively regulates the IL4/interleukin-4 mediated signaling. Post-translationally, mono-ADP-ribosylated by PARP14.

The protein resides in the cytoplasm. It is found in the nucleus. In terms of biological role, carries out a dual function: signal transduction and activation of transcription. Involved in IL4/interleukin-4- and IL3/interleukin-3-mediated signaling. This is Signal transducer and activator of transcription 6 (STAT6) from Homo sapiens (Human).